Consider the following 182-residue polypeptide: Adenine phosphoribosyltransferase (182 aa).

This sequence belongs to the purine/pyrimidine phosphoribosyltransferase family. In terms of assembly, homodimer.

It localises to the cytoplasm. It carries out the reaction AMP + diphosphate = 5-phospho-alpha-D-ribose 1-diphosphate + adenine. It participates in purine metabolism; AMP biosynthesis via salvage pathway; AMP from adenine: step 1/1. In terms of biological role, catalyzes a salvage reaction resulting in the formation of AMP, that is energically less costly than de novo synthesis. The sequence is that of Adenine phosphoribosyltransferase from Bordetella pertussis (strain Tohama I / ATCC BAA-589 / NCTC 13251).